The chain runs to 210 residues: Glycerol-3-phosphate acyltransferase (210 aa).

6 consecutive transmembrane segments (helical) span residues 8 to 28 (LILL…LLLT), 56 to 76 (GLAA…VLIA), 87 to 107 (TMAV…WLGF), 119 to 139 (TIWV…LLVA), 144 to 164 (ISSA…VLLS), and 165 to 185 (GRPL…LIWA).

This sequence belongs to the PlsY family. As to quaternary structure, probably interacts with PlsX.

The protein resides in the cell inner membrane. It carries out the reaction an acyl phosphate + sn-glycerol 3-phosphate = a 1-acyl-sn-glycero-3-phosphate + phosphate. It functions in the pathway lipid metabolism; phospholipid metabolism. Functionally, catalyzes the transfer of an acyl group from acyl-phosphate (acyl-PO(4)) to glycerol-3-phosphate (G3P) to form lysophosphatidic acid (LPA). This enzyme utilizes acyl-phosphate as fatty acyl donor, but not acyl-CoA or acyl-ACP. The sequence is that of Glycerol-3-phosphate acyltransferase from Gluconobacter oxydans (strain 621H) (Gluconobacter suboxydans).